The chain runs to 316 residues: Fe-S cluster assembly protein DRE2 (316 aa).

Positions 4–156 are N-terminal SAM-like domain; it reads SMPVATTVAA…KPQHVASTSV (153 aa). A linker region spans residues 157-202; it reads PLKSRQPGALLNRKKTDPAKKQALWALSSPSTPKIDPEALLTAEDK. [2Fe-2S] cluster contacts are provided by Cys209, Cys223, Cys226, and Cys228. Residues 209-228 form a fe-S binding site A region; sequence CEPVRSSAPRRKKACKSCSC. [4Fe-4S] cluster is bound by residues Cys279, Cys282, Cys290, and Cys293. 2 consecutive short sequence motifs (cx2C motif) follow at residues 279-282 and 290-293; these read CGSC and CAGC. The interval 279 to 293 is fe-S binding site B; it reads CGSCFLGDAFRCAGC.

Belongs to the anamorsin family. Monomer. Interacts with TAH18. Interacts with MIA40. The cofactor is [2Fe-2S] cluster. It depends on [4Fe-4S] cluster as a cofactor.

Its subcellular location is the cytoplasm. It is found in the mitochondrion intermembrane space. Its function is as follows. Component of the cytosolic iron-sulfur (Fe-S) protein assembly (CIA) machinery required for the maturation of extramitochondrial Fe-S proteins. Part of an electron transfer chain functioning in an early step of cytosolic Fe-S biogenesis, facilitating the de novo assembly of a [4Fe-4S] cluster on the scaffold complex CFD1-NBP35. Electrons are transferred to DRE2 from NADPH via the FAD- and FMN-containing protein TAH18. TAH18-DRE2 are also required for the assembly of the diferric tyrosyl radical cofactor of ribonucleotide reductase (RNR), probably by providing electrons for reduction during radical cofactor maturation in the catalytic small subunit RNR2. In Laccaria bicolor (strain S238N-H82 / ATCC MYA-4686) (Bicoloured deceiver), this protein is Fe-S cluster assembly protein DRE2.